A 255-amino-acid chain; its full sequence is MSGSKCCSSSNTIKVSIYLFLHTLTYGLLNYHLNPRLLASTGVVESDIPYWMSYLSIIMHVGQSLLLQKFNLGYGWLLLTKYPVYVLLSTYYLTPLSQIAWAFIIDAISLLVARCFSRANPIKCSNQVNTQYSVSFLFTIMASVLISVLNYISQKIFLNGLILGNSHNVVTSLVAPPLPLQYLAHVPIGYVIQRVVFSERPIPQSLFLMIFLTLWNCFIPYSILFSMNWSAMFQVVGAYLSQIWIITFICWALSL.

8 helical membrane-spanning segments follow: residues 13–33 (IKVS…NYHL), 48–68 (IPYW…LLLQ), 72–94 (LGYG…YYLT), 99–116 (IAWA…ARCF), 132–152 (YSVS…LNYI), 172–192 (SLVA…GYVI), 205–225 (SLFL…SILF), and 235–255 (VVGA…ALSL).

The protein resides in the endoplasmic reticulum membrane. It is found in the nucleus inner membrane. In terms of biological role, connects telomeres to the nuclear envelop (NE) during both vegetative growth and meiosis. This connection ensures clustering of telomeres to the spindle pole body (SPB) when cells enter meiotic prophase. This Schizosaccharomyces pombe (strain 972 / ATCC 24843) (Fission yeast) protein is Bouquet formation protein 3 (bqt3).